We begin with the raw amino-acid sequence, 81 residues long: Omega-conotoxin-like TxO4 (81 aa).

The signal sequence occupies residues 1 to 22; the sequence is MKLTCVVIVAVLFLTAWTFVTA. Positions 23-52 are excised as a propeptide; the sequence is VPHSSNALENLYLKARHEMENPEASKLNTR. 3 disulfide bridges follow: cysteine 55–cysteine 72, cysteine 62–cysteine 76, and cysteine 71–cysteine 80. Position 70 is a 4-hydroxyproline; partial (proline 70). Tryptophan 75 is subject to 6'-bromotryptophan; partial.

This sequence belongs to the conotoxin O1 superfamily. Post-translationally, txO4 is found with and without hydroxyproline and these two forms have a bromotryptophan. Truncated TxO4 is found with and without bromotryptophan, and these two forms have no hydroxyproline. Expressed by the venom duct.

It is found in the secreted. Omega-conotoxins act at presynaptic membranes, they bind and block voltage-gated calcium channels (Cav). The chain is Omega-conotoxin-like TxO4 from Conus textile (Cloth-of-gold cone).